Reading from the N-terminus, the 534-residue chain is CTP synthase (534 aa).

The amidoligase domain stretch occupies residues 1 to 268 (MSVKYIFVTG…AKIVCKRLGL (268 aa)). Residue Ser14 participates in CTP binding. UTP is bound at residue Ser14. 15–20 (GLGKGI) contacts ATP. Tyr55 serves as a coordination point for L-glutamine. Asp72 contacts ATP. The Mg(2+) site is built by Asp72 and Glu142. CTP is bound by residues 149–151 (DIE), 189–194 (KTKPTQ), and Lys225. UTP contacts are provided by residues 189–194 (KTKPTQ) and Lys225. Positions 293–534 (TIGLVGKYVE…VRAAYEYKTK (242 aa)) constitute a Glutamine amidotransferase type-1 domain. Gly355 contributes to the L-glutamine binding site. Cys382 acts as the Nucleophile; for glutamine hydrolysis in catalysis. L-glutamine is bound by residues 383–386 (LGMQ), Glu406, and Arg462. Catalysis depends on residues His507 and Glu509.

The protein belongs to the CTP synthase family. Homotetramer.

The catalysed reaction is UTP + L-glutamine + ATP + H2O = CTP + L-glutamate + ADP + phosphate + 2 H(+). It carries out the reaction L-glutamine + H2O = L-glutamate + NH4(+). It catalyses the reaction UTP + NH4(+) + ATP = CTP + ADP + phosphate + 2 H(+). It functions in the pathway pyrimidine metabolism; CTP biosynthesis via de novo pathway; CTP from UDP: step 2/2. Allosterically activated by GTP, when glutamine is the substrate; GTP has no effect on the reaction when ammonia is the substrate. The allosteric effector GTP functions by stabilizing the protein conformation that binds the tetrahedral intermediate(s) formed during glutamine hydrolysis. Inhibited by the product CTP, via allosteric rather than competitive inhibition. Catalyzes the ATP-dependent amination of UTP to CTP with either L-glutamine or ammonia as the source of nitrogen. Regulates intracellular CTP levels through interactions with the four ribonucleotide triphosphates. This chain is CTP synthase, found in Ruminiclostridium cellulolyticum (strain ATCC 35319 / DSM 5812 / JCM 6584 / H10) (Clostridium cellulolyticum).